The following is a 368-amino-acid chain: Histidinol dehydrogenase (368 aa).

Residues Thr197, Gln218, and His221 each contribute to the substrate site. Zn(2+)-binding residues include Gln218 and His221. Catalysis depends on proton acceptor residues Glu276 and His277. 4 residues coordinate substrate: His277, Asp306, Glu358, and His363. A Zn(2+)-binding site is contributed by Asp306. His363 contacts Zn(2+).

The protein belongs to the histidinol dehydrogenase family. Zn(2+) is required as a cofactor.

The enzyme catalyses L-histidinol + 2 NAD(+) + H2O = L-histidine + 2 NADH + 3 H(+). The protein operates within amino-acid biosynthesis; L-histidine biosynthesis; L-histidine from 5-phospho-alpha-D-ribose 1-diphosphate: step 9/9. Its function is as follows. Catalyzes the sequential NAD-dependent oxidations of L-histidinol to L-histidinaldehyde and then to L-histidine. The polypeptide is Histidinol dehydrogenase (Pyrobaculum aerophilum (strain ATCC 51768 / DSM 7523 / JCM 9630 / CIP 104966 / NBRC 100827 / IM2)).